A 444-amino-acid polypeptide reads, in one-letter code: ATP-dependent protease ATPase subunit HslU (444 aa).

ATP-binding positions include I18, 60–65 (GVGKTE), D256, E321, and R393.

Belongs to the ClpX chaperone family. HslU subfamily. As to quaternary structure, a double ring-shaped homohexamer of HslV is capped on each side by a ring-shaped HslU homohexamer. The assembly of the HslU/HslV complex is dependent on binding of ATP.

Its subcellular location is the cytoplasm. In terms of biological role, ATPase subunit of a proteasome-like degradation complex; this subunit has chaperone activity. The binding of ATP and its subsequent hydrolysis by HslU are essential for unfolding of protein substrates subsequently hydrolyzed by HslV. HslU recognizes the N-terminal part of its protein substrates and unfolds these before they are guided to HslV for hydrolysis. The protein is ATP-dependent protease ATPase subunit HslU of Buchnera aphidicola subsp. Baizongia pistaciae (strain Bp).